The primary structure comprises 260 residues: Phosphate import ATP-binding protein PstB (260 aa).

An ABC transporter domain is found at 14 to 255 (LQIRNLDFFY…PGKKQTEDYI (242 aa)). 46–53 (GPSGCGKS) contacts ATP.

The protein belongs to the ABC transporter superfamily. Phosphate importer (TC 3.A.1.7) family. The complex is composed of two ATP-binding proteins (PstB), two transmembrane proteins (PstC and PstA) and a solute-binding protein (PstS).

The protein localises to the cell inner membrane. The catalysed reaction is phosphate(out) + ATP + H2O = ADP + 2 phosphate(in) + H(+). Part of the ABC transporter complex PstSACB involved in phosphate import. Responsible for energy coupling to the transport system. In Thiobacillus denitrificans (strain ATCC 25259 / T1), this protein is Phosphate import ATP-binding protein PstB.